Consider the following 325-residue polypeptide: uncharacterized protein (325 aa).

The disordered stretch occupies residues 1–32; the sequence is MKQEYIPLDEFPNKSNEGMLNDEGTSSSGLST. Residues 23–32 are compositionally biased toward low complexity; that stretch reads EGTSSSGLST. A coiled-coil region spans residues 135–223; the sequence is AEEISNLKTS…LKKREDLLRL (89 aa).

It localises to the cytoplasm. Its subcellular location is the cytoskeleton. It is found in the microtubule organizing center. The protein resides in the spindle pole body. This is an uncharacterized protein from Schizosaccharomyces pombe (strain 972 / ATCC 24843) (Fission yeast).